Reading from the N-terminus, the 572-residue chain is Secreted triacylglycerol lipase LIP6 (572 aa).

Residues 1 to 23 form the signal peptide; it reads MYSTSLLRWLVVALVSAVPLVTA. Cysteine 117 and cysteine 291 are oxidised to a cystine. Serine 202 acts as the Nucleophile in catalysis. Residue aspartate 351 is part of the active site. N-linked (GlcNAc...) asparagine glycosylation is present at asparagine 360. Histidine 385 is an active-site residue. The segment at 468–572 is disordered; sequence KGGVWNDVLK…SSRRHVARFM (105 aa). The span at 491–511 shows a compositional bias: basic and acidic residues; it reads PESKKATKKYKSESKAEKKQP. Low complexity predominate over residues 512 to 525; that stretch reads DSIPSSSSKSSSDN. Asparagine 525 carries N-linked (GlcNAc...) asparagine glycosylation. Over residues 528–540 the composition is skewed to basic residues; the sequence is AHAKYHAHGHGHG. Residues 541–562 show a composition bias toward low complexity; the sequence is HASSNSNNGHSHSAKESSTSKG. Residues 563-572 show a composition bias toward basic residues; it reads SSRRHVARFM.

Belongs to the AB hydrolase superfamily. Lipase family. Class Lip subfamily.

The protein localises to the secreted. It is found in the cell wall. The catalysed reaction is a triacylglycerol + H2O = a diacylglycerol + a fatty acid + H(+). The enzyme catalyses a monoacylglycerol + H2O = glycerol + a fatty acid + H(+). It catalyses the reaction a diacylglycerol + H2O = a monoacylglycerol + a fatty acid + H(+). In terms of biological role, secreted lipase involved in Dandruff and seborrheic dermatitis (D/SD) probably via lipase-mediated breakdown of sebaceous lipids and release of irritating free fatty acids. Shows only minimal activity against triolein. Mostly converts monoolein to di- and triolein, while free fatty acids are only produced in low amounts. The sequence is that of Secreted triacylglycerol lipase LIP6 from Malassezia globosa (strain ATCC MYA-4612 / CBS 7966) (Dandruff-associated fungus).